Here is an 88-residue protein sequence, read N- to C-terminus: DNA-directed RNA polymerase subunit omega (88 aa).

The protein belongs to the RNA polymerase subunit omega family. The RNAP catalytic core consists of 2 alpha, 1 beta, 1 beta' and 1 omega subunit. When a sigma factor is associated with the core the holoenzyme is formed, which can initiate transcription.

It carries out the reaction RNA(n) + a ribonucleoside 5'-triphosphate = RNA(n+1) + diphosphate. Functionally, promotes RNA polymerase assembly. Latches the N- and C-terminal regions of the beta' subunit thereby facilitating its interaction with the beta and alpha subunits. The chain is DNA-directed RNA polymerase subunit omega from Salinispora arenicola (strain CNS-205).